We begin with the raw amino-acid sequence, 689 residues long: Beta-adrenergic receptor kinase 1 (689 aa).

Residues 1-190 form an N-terminal region; sequence MADLEAVLAD…ELNIHLTMND (190 aa). One can recognise an RGS domain in the interval 54–175; it reads TFEKIFSQKL…IESDKFTRFC (122 aa). Positions 191-453 constitute a Protein kinase domain; the sequence is FSVHRIIGRG…AQEVKESPFF (263 aa). ATP contacts are provided by residues 197 to 205 and lysine 220; that span reads IGRGGFGEV. The active-site Proton acceptor is the aspartate 317. The AGC-kinase C-terminal domain maps to 454-521; the sequence is RSLDWQMVFL…TISERWQQEV (68 aa). In terms of domain architecture, PH spans 558-652; that stretch reads DCIMHGYMSK…WKKELRDAYR (95 aa). Residue serine 670 is modified to Phosphoserine.

It belongs to the protein kinase superfamily. AGC Ser/Thr protein kinase family. GPRK subfamily. Interacts with the heterodimer formed by GNB1 and GNG2. Interacts with GIT1. Interacts with, and phosphorylates chemokine-stimulated CCR5. Interacts with ARRB1. Interacts with LPAR1 and LPAR2. Interacts with RALA in response to LPAR1 activation. ADRBK1 and RALA mutually inhibit each other's binding to LPAR1. Interacts with ADRB2. In terms of tissue distribution, expressed in peripheral blood leukocytes.

The protein resides in the cytoplasm. The protein localises to the cell membrane. Its subcellular location is the postsynapse. It is found in the presynapse. It catalyses the reaction [beta-adrenergic receptor] + ATP = [beta-adrenergic receptor]-phosphate + ADP + H(+). With respect to regulation, in contrast to other AGC family kinases, the catalytic activity is solely regulated by the binding of substrates and ligands, not by phosphorylation of the kinase domain. Specifically phosphorylates the agonist-occupied form of the beta-adrenergic and closely related receptors, probably inducing a desensitization of them. Key regulator of LPAR1 signaling. Competes with RALA for binding to LPAR1 thus affecting the signaling properties of the receptor. Desensitizes LPAR1 and LPAR2 in a phosphorylation-independent manner. Positively regulates ciliary smoothened (SMO)-dependent Hedgehog (Hh) signaling pathway by facilitating the trafficking of SMO into the cilium and the stimulation of SMO activity. Inhibits relaxation of airway smooth muscle in response to blue light. The polypeptide is Beta-adrenergic receptor kinase 1 (Homo sapiens (Human)).